Consider the following 576-residue polypeptide: Glutamine-dependent NAD(+) synthetase (576 aa).

A CN hydrolase domain is found at 4 to 246 (LRVTLAQLNP…EEIITVDLDL (243 aa)). The Proton acceptor; for glutaminase activity role is filled by Glu44. Lys112 acts as the For glutaminase activity in catalysis. Tyr118 contacts L-glutamine. Cys148 serves as the catalytic Nucleophile; for glutaminase activity. Positions 176 and 182 each coordinate L-glutamine. The interval 292 to 576 (PVREEEMFRA…PITNRFKEPL (285 aa)) is ligase. 321–328 (GLSGGMDS) is an ATP binding site. Asn404 is a deamido-NAD(+) binding site. Position 428 (Thr428) interacts with ATP. The deamido-NAD(+) site is built by Glu433 and Lys545.

This sequence in the C-terminal section; belongs to the NAD synthetase family.

It catalyses the reaction deamido-NAD(+) + L-glutamine + ATP + H2O = L-glutamate + AMP + diphosphate + NAD(+) + H(+). The protein operates within cofactor biosynthesis; NAD(+) biosynthesis; NAD(+) from deamido-NAD(+) (L-Gln route): step 1/1. Catalyzes the ATP-dependent amidation of deamido-NAD to form NAD. Uses L-glutamine as a nitrogen source. The protein is Glutamine-dependent NAD(+) synthetase (nadE2) of Thermotoga maritima (strain ATCC 43589 / DSM 3109 / JCM 10099 / NBRC 100826 / MSB8).